The chain runs to 450 residues: MREIISIHIGQAGIQVGNACWELYCLEHGIEHDGTMPSDSSVGVAHDAFNTFFSETGSGKHVPRAIFVDLEPTVIDEVRTGSYRQLFHPEQLISGKEDAANNFARGHYTVGKEIVDLCLDRVRKLADNCTGLQGFLVFNAVGGGTGSGLGSLLLERLSVDYGKKSKLGFTIYPSPQVSTAVVEPYNSVLSTHSLLEHTDVAVLLDNEAIYDICRRSLDIERPTYTNLNRLISQIISSLTTSLRFDGAINVDVTEFQTNLVPYPRIHFMLSSYAPVISAEKAYHEQLSVPEITNAVFEPSSMMAKCDPRHGKYMACCLMYRGDVVPKDVNAAVATIKTKRTVQFVDWCPTGFKCGINYQPPSVVPGGDLAKVQRAVCMISNNTAVAEVFSRIDHKFDLMYAKRAFVHWYVGEGMEEGEFSEAREDLAALEKDYEEVGAEGADDEGDEGDDY.

7 residues coordinate GTP: Gln11, Glu71, Gly144, Thr145, Thr179, Asn206, and Asn228. A Mg(2+)-binding site is contributed by Glu71. Glu254 is a catalytic residue.

This sequence belongs to the tubulin family. As to quaternary structure, dimer of alpha and beta chains. A typical microtubule is a hollow water-filled tube with an outer diameter of 25 nm and an inner diameter of 15 nM. Alpha-beta heterodimers associate head-to-tail to form protofilaments running lengthwise along the microtubule wall with the beta-tubulin subunit facing the microtubule plus end conferring a structural polarity. Microtubules usually have 13 protofilaments but different protofilament numbers can be found in some organisms and specialized cells. Mg(2+) is required as a cofactor. Undergoes a tyrosination/detyrosination cycle, the cyclic removal and re-addition of a C-terminal tyrosine residue by the enzymes tubulin tyrosine carboxypeptidase (TTCP) and tubulin tyrosine ligase (TTL), respectively.

It is found in the cytoplasm. The protein localises to the cytoskeleton. It carries out the reaction GTP + H2O = GDP + phosphate + H(+). Functionally, tubulin is the major constituent of microtubules, a cylinder consisting of laterally associated linear protofilaments composed of alpha- and beta-tubulin heterodimers. Microtubules grow by the addition of GTP-tubulin dimers to the microtubule end, where a stabilizing cap forms. Below the cap, tubulin dimers are in GDP-bound state, owing to GTPase activity of alpha-tubulin. This Zea mays (Maize) protein is Tubulin alpha-5 chain (TUBA5).